The following is a 520-amino-acid chain: Anthranilate synthase component 1 (520 aa).

Residues S40, K50, and 291-293 (PYM) each bind L-tryptophan. Residue 328–329 (GT) participates in chorismate binding. E361 provides a ligand contact to Mg(2+). Residues Y449, R469, 483–485 (GAG), and G485 each bind chorismate. E498 contacts Mg(2+).

This sequence belongs to the anthranilate synthase component I family. As to quaternary structure, homodimer. In fact, exists in a monomer-dimer equilibrium in solution, shifted spontaneously in favor of the dimer; the monomer has a reduced activity compared with the dimer. Heterotetramer consisting of two non-identical subunits: a beta subunit (TrpG) and a large alpha subunit (TrpE) (Potential). The cofactor is Mg(2+).

The enzyme catalyses chorismate + L-glutamine = anthranilate + pyruvate + L-glutamate + H(+). Its pathway is amino-acid biosynthesis; L-tryptophan biosynthesis; L-tryptophan from chorismate: step 1/5. With respect to regulation, cooperatively feedback inhibited by tryptophan. Its function is as follows. Part of a heterotetrameric complex that catalyzes the two-step biosynthesis of anthranilate, an intermediate in the biosynthesis of L-tryptophan. In the first step, the glutamine-binding beta subunit (TrpG) of anthranilate synthase (AS) provides the glutamine amidotransferase activity which generates ammonia as a substrate that, along with chorismate, is used in the second step, catalyzed by the large alpha subunit of AS (TrpE) to produce anthranilate. In the absence of TrpG, TrpE can synthesize anthranilate directly from chorismate and high concentrations of ammonia. This Salmonella typhimurium (strain LT2 / SGSC1412 / ATCC 700720) protein is Anthranilate synthase component 1 (trpE).